The primary structure comprises 556 residues: Membrane protein insertase YidC (556 aa).

A helical transmembrane segment spans residues 7 to 27 (ILLVALAVVAYLMVLQWNQDY). Disordered regions lie at residues 35 to 59 (ETAQ…GNAN) and 126 to 152 (SSER…PQYS). The span at 36-54 (TAQSQPAAPALPDSPSATT) shows a compositional bias: low complexity. 4 consecutive transmembrane segments (helical) span residues 365 to 385 (LLGN…LAFF), 435 to 455 (LGGC…YWVL), 468 to 488 (FWIT…IMGV), and 513 to 533 (PIIF…YWVV).

The protein belongs to the OXA1/ALB3/YidC family. Type 1 subfamily. As to quaternary structure, interacts with the Sec translocase complex via SecD. Specifically interacts with transmembrane segments of nascent integral membrane proteins during membrane integration.

Its subcellular location is the cell inner membrane. Required for the insertion and/or proper folding and/or complex formation of integral membrane proteins into the membrane. Involved in integration of membrane proteins that insert both dependently and independently of the Sec translocase complex, as well as at least some lipoproteins. Aids folding of multispanning membrane proteins. The chain is Membrane protein insertase YidC from Stutzerimonas stutzeri (strain A1501) (Pseudomonas stutzeri).